Consider the following 423-residue polypeptide: MVFSNNDEGRINKKLPKELLLRIFSFLDIVTLCRCAQISKAWNILALDGSNWQRIDLFNFQTDVEGRVVENISKRCGGFLRKLSLRGCIGVGDSSLKTFAQNCRNIEHLNLNGCTKITDSTCYSLSRFCSKLKHLDLTSCVSITNSSLKGISEGCRNLEYLNLSWCDQITKDGIEALVRGCRGLKALLLRGCTQLEDEALKHIQNYCHELVSLNLQSCSRITDEGVVQICRGCHRLQALCLSGCSNLTDASLTALGLNCPRLQILEAARCSHLTDAGFTLLARNCHELEKMDLEECILITDSTLIQLSIHCPKLQALSLSHCELITDDGILHLSNSTCGHERLRVLELDNCLLITDVALEHLENCRGLERLELYDCQQVTRAGIKRMRAQLPHVKVHAYFAPVTPPTAVTGSGQRLCRCCVIL.

An F-box domain is found at 9 to 55; that stretch reads GRINKKLPKELLLRIFSFLDIVTLCRCAQISKAWNILALDGSNWQRI. LRR repeat units lie at residues 61–87, 88–113, 114–139, 140–165, 166–191, 192–217, 218–243, 244–269, 270–295, 296–321, 322–350, 351–375, and 376–401; these read QTDV…SLRG, CIGV…NLNG, CTKI…DLTS, CVSI…NLSW, CDQI…LLRG, CTQL…NLQS, CSRI…CLSG, CSNL…EAAR, CSHL…DLEE, CILI…SLSH, CELI…ELDN, CLLI…ELYD, and CQQV…AYFA. An interaction with Calmodulin region spans residues 80–90; the sequence is LRKLSLRGCIG. Lys201 is covalently cross-linked (Glycyl lysine isopeptide (Lys-Gly) (interchain with G-Cter in ubiquitin)). At Thr404 the chain carries Phosphothreonine. Cys420 carries the S-geranylgeranyl cysteine lipid modification. Positions 420–423 match the CAAX motif motif; sequence CVIL.

As to quaternary structure, part of the SCF (SKP1-CUL1-F-box) E3 ubiquitin-protein ligase complex SCF(FBXL2) composed of CUL1, SKP1, RBX1 and FBXL2. Interacts with calmodulin; may antagonize substrate ubiquitination by SCF(FBXL2). May interact with PIK3R1. Interacts with PTPN13. Post-translationally, phosphorylated by GSK-beta (GSK3B), promoting recognition by FBXO3, leading to its ubiquitination by the SCF(FBXO3) complex. Ubiquitinated at Lys-201 by the SCF(FBXO3) complex in response to lipopolysaccharide (LPS), leading to its degradation by the proteasome.

The protein resides in the membrane. Its pathway is protein modification; protein ubiquitination. Its function is as follows. Calcium-activated substrate recognition component of the SCF (SKP1-cullin-F-box protein) E3 ubiquitin-protein ligase complex, SCF(FBXL2), which mediates the ubiquitination and subsequent proteasomal degradation of target proteins. Unlike many F-box proteins, FBXL2 does not seem to target phosphodegron within its substrates but rather calmodulin-binding motifs and is thereby antagonized by calmodulin. This is the case for the cyclins CCND2 and CCND3 which polyubiquitination and subsequent degradation are inhibited by calmodulin. Through CCND2 and CCND3 degradation induces cell-cycle arrest in G(0). SCF(FBXL2) also mediates PIK3R2 ubiquitination and proteasomal degradation thereby regulating phosphatidylinositol 3-kinase signaling and autophagy. PCYT1A monoubiquitination by SCF(FBXL2) and subsequent degradation regulates synthesis of phosphatidylcholine, which is utilized for formation of membranes and of pulmonary surfactant. The SCF(FBXL2) complex acts as a regulator of inflammation by mediating ubiquitination and degradation of TRAF proteins (TRAF1, TRAF2, TRAF3, TRAF4, TRAF5 and TRAF6). The SCF(FBXL2) complex acts as a negative regulator of the NLRP3 inflammasome by mediating ubiquitination and degradation of NLRP3. The sequence is that of F-box/LRR-repeat protein 2 from Pongo abelii (Sumatran orangutan).